We begin with the raw amino-acid sequence, 134 residues long: Lymphocyte antigen 6F (134 aa).

The N-terminal stretch at 1-26 is a signal peptide; the sequence is MDSCHTTKSCVLILLVVLLCAERAQG. Residues 27 to 119 enclose the UPAR/Ly6 domain; the sequence is LECYNCLGVS…TGGSTWTMTR (93 aa). 5 disulfides stabilise this stretch: cysteine 29-cysteine 53, cysteine 32-cysteine 41, cysteine 46-cysteine 74, cysteine 78-cysteine 98, and cysteine 99-cysteine 104. The GPI-anchor amidated glycine moiety is linked to residue glycine 112. Positions 113–134 are cleaved as a propeptide — removed in mature form; that stretch reads STWTMTRVLLLNLGSVFLQTLL.

The protein localises to the cell membrane. The sequence is that of Lymphocyte antigen 6F (Ly6f) from Mus musculus (Mouse).